The sequence spans 180 residues: Crossover junction endodeoxyribonuclease RuvC (180 aa).

Catalysis depends on residues Asp7, Glu66, and Asp138. Asp7, Glu66, and Asp138 together coordinate Mg(2+).

Belongs to the RuvC family. As to quaternary structure, homodimer which binds Holliday junction (HJ) DNA. The HJ becomes 2-fold symmetrical on binding to RuvC with unstacked arms; it has a different conformation from HJ DNA in complex with RuvA. In the full resolvosome a probable DNA-RuvA(4)-RuvB(12)-RuvC(2) complex forms which resolves the HJ. Requires Mg(2+) as cofactor.

The protein localises to the cytoplasm. The catalysed reaction is Endonucleolytic cleavage at a junction such as a reciprocal single-stranded crossover between two homologous DNA duplexes (Holliday junction).. Functionally, the RuvA-RuvB-RuvC complex processes Holliday junction (HJ) DNA during genetic recombination and DNA repair. Endonuclease that resolves HJ intermediates. Cleaves cruciform DNA by making single-stranded nicks across the HJ at symmetrical positions within the homologous arms, yielding a 5'-phosphate and a 3'-hydroxyl group; requires a central core of homology in the junction. The consensus cleavage sequence is 5'-(A/T)TT(C/G)-3'. Cleavage occurs on the 3'-side of the TT dinucleotide at the point of strand exchange. HJ branch migration catalyzed by RuvA-RuvB allows RuvC to scan DNA until it finds its consensus sequence, where it cleaves and resolves the cruciform DNA. The polypeptide is Crossover junction endodeoxyribonuclease RuvC (Paraburkholderia phytofirmans (strain DSM 17436 / LMG 22146 / PsJN) (Burkholderia phytofirmans)).